The chain runs to 343 residues: DNA-directed RNA polymerase subunit alpha (343 aa).

The interval 1–243 (MTQEIDEKIP…EQLDIFINFD (243 aa)) is alpha N-terminal domain (alpha-NTD). The interval 261 to 343 (ENPYLDKPVE…NAPSDAETEE (83 aa)) is alpha C-terminal domain (alpha-CTD).

This sequence belongs to the RNA polymerase alpha chain family. As to quaternary structure, homodimer. The RNAP catalytic core consists of 2 alpha, 1 beta, 1 beta' and 1 omega subunit. When a sigma factor is associated with the core the holoenzyme is formed, which can initiate transcription.

It carries out the reaction RNA(n) + a ribonucleoside 5'-triphosphate = RNA(n+1) + diphosphate. Functionally, DNA-dependent RNA polymerase catalyzes the transcription of DNA into RNA using the four ribonucleoside triphosphates as substrates. This is DNA-directed RNA polymerase subunit alpha from Desulfotalea psychrophila (strain LSv54 / DSM 12343).